Consider the following 278-residue polypeptide: Large ribosomal subunit protein uL2 (278 aa).

A disordered region spans residues 222 to 278; the sequence is GVVMNPIDHPHGGGEGRTSGGRHPVTPWGKPTKGKKTRSNKSTDKFILISRHKRKKK.

The protein belongs to the universal ribosomal protein uL2 family. As to quaternary structure, part of the 50S ribosomal subunit. Forms a bridge to the 30S subunit in the 70S ribosome.

Functionally, one of the primary rRNA binding proteins. Required for association of the 30S and 50S subunits to form the 70S ribosome, for tRNA binding and peptide bond formation. It has been suggested to have peptidyltransferase activity; this is somewhat controversial. Makes several contacts with the 16S rRNA in the 70S ribosome. The protein is Large ribosomal subunit protein uL2 of Rhodopseudomonas palustris (strain ATCC BAA-98 / CGA009).